Reading from the N-terminus, the 74-residue chain is Protein SlyX homolog (74 aa).

Belongs to the SlyX family.

This is Protein SlyX homolog from Aliivibrio fischeri (strain ATCC 700601 / ES114) (Vibrio fischeri).